Here is a 198-residue protein sequence, read N- to C-terminus: NAD(P)H dehydrogenase (quinone) (198 aa).

The Flavodoxin-like domain maps to 4 to 189 (ILVLYYSMYG…AIARYQGEHV (186 aa)). Residues 10–15 (SMYGHI) and 78–80 (TRF) contribute to the FMN site. Y12 contributes to the NAD(+) binding site. W98 is a binding site for substrate. Residues 113 to 118 (STGTGG) and H133 contribute to the FMN site.

This sequence belongs to the WrbA family. FMN serves as cofactor.

It carries out the reaction a quinone + NADH + H(+) = a quinol + NAD(+). It catalyses the reaction a quinone + NADPH + H(+) = a quinol + NADP(+). The polypeptide is NAD(P)H dehydrogenase (quinone) (Klebsiella pneumoniae (strain 342)).